Here is a 252-residue protein sequence, read N- to C-terminus: Coenzyme F420:L-glutamate ligase (252 aa).

GTP is bound by residues 12–15, 44–45, and K49; these read VPLE and HT. D114 contributes to the a divalent metal cation binding site. A GTP-binding site is contributed by N117. A divalent metal cation-binding residues include D155, T156, and Q213. 211 to 218 lines the GTP pocket; the sequence is MGQADEGT.

Belongs to the CofE family. Homodimer. It depends on Mg(2+) as a cofactor. Mn(2+) is required as a cofactor. Requires K(+) as cofactor.

The catalysed reaction is oxidized coenzyme F420-0 + GTP + L-glutamate = oxidized coenzyme F420-1 + GDP + phosphate + H(+). It catalyses the reaction oxidized coenzyme F420-1 + GTP + L-glutamate = oxidized coenzyme F420-2 + GDP + phosphate + H(+). It participates in cofactor biosynthesis; coenzyme F420 biosynthesis. Catalyzes the GTP-dependent successive addition of two or more gamma-linked L-glutamates to the L-lactyl phosphodiester of 7,8-didemethyl-8-hydroxy-5-deazariboflavin (F420-0) to form coenzyme F420-0-glutamyl-glutamate (F420-2) or polyglutamated F420 derivatives. This is Coenzyme F420:L-glutamate ligase from Methanopyrus kandleri (strain AV19 / DSM 6324 / JCM 9639 / NBRC 100938).